Consider the following 1090-residue polypeptide: Nitrogen assimilation transcription factor nit-4 (1090 aa).

Residues 1 to 14 (MNSSDVQMMSSQDA) show a composition bias toward polar residues. The segment at 1-43 (MNSSDVQMMSSQDAPGSAGLAPDNIASSLPSKKKSRRGADPTN) is disordered. A DNA-binding region (zn(2)-C6 fungal-type) is located at residues 53–81 (CIACRRRKSKCDGALPSCAACASVYGTEC). Disordered stretches follow at residues 145-176 (RRDEKNATATNDNDDSDEPTQPGRDDATSQAV), 666-689 (FSTSEVPSPNRTAPSLAPSSPAPP), 773-798 (HQHHHHLQNQHQPQQPHHNHMTYQQQ), 825-875 (GIPT…VKPP), 936-999 (QGWD…QRQQ), and 1033-1053 (HGAERGGGGIESTGMGMTTVG). Over residues 167–176 (GRDDATSQAV) the composition is skewed to basic and acidic residues. Residues 666-677 (FSTSEVPSPNRT) are compositionally biased toward polar residues. The span at 849–859 (QPQQQQQPQAQ) shows a compositional bias: low complexity. Composition is skewed to gly residues over residues 940-965 (LEGGGAGTATSTGGIGDGGGPTGGAG) and 976-988 (NIGGGGGGGGGST). The segment covering 990 to 999 (QRQQQQQRQQ) has biased composition (low complexity).

The protein localises to the nucleus. In terms of biological role, pathway-specific regulatory gene of nitrate assimilation; it activates the transcription of the genes for nitrate and nitrite reductases. The chain is Nitrogen assimilation transcription factor nit-4 (nit-4) from Neurospora crassa (strain ATCC 24698 / 74-OR23-1A / CBS 708.71 / DSM 1257 / FGSC 987).